Consider the following 416-residue polypeptide: Catalase-peroxidase 2 (416 aa).

The N-terminal stretch at 1 to 20 (MLLPLIVFLLSVLIHHRIYS) is a signal peptide.

It belongs to the peroxidase family. Peroxidase/catalase subfamily. In terms of assembly, homodimer or homotetramer. Heme b serves as cofactor. Formation of the three residue Trp-Tyr-Met cross-link is important for the catalase, but not the peroxidase activity of the enzyme.

It catalyses the reaction H2O2 + AH2 = A + 2 H2O. The enzyme catalyses 2 H2O2 = O2 + 2 H2O. In terms of biological role, bifunctional enzyme with both catalase and broad-spectrum peroxidase activity. This is Catalase-peroxidase 2 (katG2) from Alkaliphilus metalliredigens (strain QYMF).